The following is a 131-amino-acid chain: MRHRHGLRKLNRTSSHRQAMFRNMANALLRHEVIKTTLPKAKELRRVVEPMITLGKKPSLANRRLAFDRLRDREIVVKLFDELGPRYATRNGGYLRILKFGFRDGDNAPMALVELLDRPEAEVAEQEAVAA.

Belongs to the bacterial ribosomal protein bL17 family. As to quaternary structure, part of the 50S ribosomal subunit. Contacts protein L32.

In Azoarcus sp. (strain BH72), this protein is Large ribosomal subunit protein bL17.